A 403-amino-acid polypeptide reads, in one-letter code: Ribonuclease T2-like (403 aa).

Residues M1 to C19 form the signal peptide. 4 cysteine pairs are disulfide-bonded: C36-C55, C44-C91, C54-C158, and C99-C150. A glycan (N-linked (GlcNAc...) asparagine) is linked at N78. Catalysis depends on residues H84, E143, and H147. An N-linked (GlcNAc...) asparagine glycan is attached at N175. C224 and C259 are oxidised to a cystine. The segment at P268 to E288 is disordered.

It belongs to the RNase T2 family.

It is found in the vacuole lumen. The protein resides in the cytoplasm. It catalyses the reaction a ribonucleotidyl-ribonucleotide-RNA + H2O = a 3'-end 3'-phospho-ribonucleotide-RNA + a 5'-end dephospho-ribonucleoside-RNA + H(+). Rnase which modulates cell survival under stress conditions. Released from the vacuole to the cytoplasm during stress to promote tRNA and rRNA cleavage and to activate separately a downstream pathway that promotes cell death. Involved in cell size, vacuolar morphology and growth at high temperatures and high salt concentration. In Debaryomyces hansenii (strain ATCC 36239 / CBS 767 / BCRC 21394 / JCM 1990 / NBRC 0083 / IGC 2968) (Yeast), this protein is Ribonuclease T2-like (RNY1).